The chain runs to 556 residues: 2-succinyl-5-enolpyruvyl-6-hydroxy-3-cyclohexene-1-carboxylate synthase (556 aa).

The protein belongs to the TPP enzyme family. MenD subfamily. As to quaternary structure, homodimer. Mg(2+) is required as a cofactor. It depends on Mn(2+) as a cofactor. The cofactor is thiamine diphosphate.

The enzyme catalyses isochorismate + 2-oxoglutarate + H(+) = 5-enolpyruvoyl-6-hydroxy-2-succinyl-cyclohex-3-ene-1-carboxylate + CO2. The protein operates within quinol/quinone metabolism; 1,4-dihydroxy-2-naphthoate biosynthesis; 1,4-dihydroxy-2-naphthoate from chorismate: step 2/7. Its pathway is quinol/quinone metabolism; menaquinone biosynthesis. Its function is as follows. Catalyzes the thiamine diphosphate-dependent decarboxylation of 2-oxoglutarate and the subsequent addition of the resulting succinic semialdehyde-thiamine pyrophosphate anion to isochorismate to yield 2-succinyl-5-enolpyruvyl-6-hydroxy-3-cyclohexene-1-carboxylate (SEPHCHC). This Salmonella dublin (strain CT_02021853) protein is 2-succinyl-5-enolpyruvyl-6-hydroxy-3-cyclohexene-1-carboxylate synthase.